Here is a 110-residue protein sequence, read N- to C-terminus: Iron-sulfur cluster assembly protein CyaY (110 aa).

This sequence belongs to the frataxin family.

Its function is as follows. Involved in iron-sulfur (Fe-S) cluster assembly. May act as a regulator of Fe-S biogenesis. The sequence is that of Iron-sulfur cluster assembly protein CyaY from Pseudomonas putida (strain ATCC 700007 / DSM 6899 / JCM 31910 / BCRC 17059 / LMG 24140 / F1).